The sequence spans 315 residues: Putative purine nucleoside phosphorylase (315 aa).

Phosphate-binding positions include S49, H81, 103–105 (RYH), and A135. E220 provides a ligand contact to a purine D-ribonucleoside. S239 contributes to the phosphate binding site. Residue N262 coordinates a purine D-ribonucleoside.

This sequence belongs to the PNP/MTAP phosphorylase family.

It is found in the cytoplasm. The protein resides in the nucleus. The catalysed reaction is a purine D-ribonucleoside + phosphate = a purine nucleobase + alpha-D-ribose 1-phosphate. Its pathway is purine metabolism; purine nucleoside salvage. Functionally, the purine nucleoside phosphorylases catalyze the phosphorolytic breakdown of the N-glycosidic bond in the beta-(deoxy)ribonucleoside molecules, with the formation of the corresponding free purine bases and pentose-1-phosphate. Cleaves guanosine and inosine. The polypeptide is Putative purine nucleoside phosphorylase (Schizosaccharomyces pombe (strain 972 / ATCC 24843) (Fission yeast)).